Consider the following 567-residue polypeptide: Sporulation-specific protein 5 (567 aa).

The span at 1-18 (MNGIITPQKQKQLMSSPS) shows a compositional bias: polar residues. Disordered stretches follow at residues 1–39 (MNGI…VDVN) and 52–76 (ILLT…KKPN). The span at 21 to 35 (PLSTTELSTPTSQTT) shows a compositional bias: low complexity. The segment covering 56–66 (PGTSPNATPGS) has biased composition (polar residues). RRM domains are found at residues 296–380 (RNVY…SLQD) and 384–462 (TNLY…FADS).

It localises to the cytoplasm. Functionally, RNA-binding protein which plays a role in sporulation. Regulates the progression of meiosis I and may function in the vicinity of the Mei2 dot. The sequence is that of Sporulation-specific protein 5 (spo5) from Schizosaccharomyces pombe (strain 972 / ATCC 24843) (Fission yeast).